Consider the following 90-residue polypeptide: Probable Fe(2+)-trafficking protein (90 aa).

This sequence belongs to the Fe(2+)-trafficking protein family.

Could be a mediator in iron transactions between iron acquisition and iron-requiring processes, such as synthesis and/or repair of Fe-S clusters in biosynthetic enzymes. The sequence is that of Probable Fe(2+)-trafficking protein from Pseudomonas fluorescens (strain ATCC BAA-477 / NRRL B-23932 / Pf-5).